The primary structure comprises 101 residues: Cyanovirin-N (101 aa).

2 disulfides stabilise this stretch: Cys8/Cys22 and Cys58/Cys73.

Belongs to the cyanovirin-N family. In terms of assembly, in solution exists as a metastable domain-swapped homodimer which very slowly converts into a more stable monomeric form at room temperature. Under physiological conditions it is unlikely that the dimeric species exists and indeed the monomer is more active against HIV. Interacts with HIV-1 gp120. Cleavage, or reduction and alkylation of the disulfide bonds results in the loss of anti-HIV activity.

In terms of biological role, mannose-binding lectin. The chain is Cyanovirin-N from Nostoc ellipsosporum.